A 476-amino-acid polypeptide reads, in one-letter code: Bifunctional protein HldE (476 aa).

Residues 1–319 form a ribokinase region; it reads MKVSLPAFEK…EALALHHGES (319 aa). 195–198 contacts ATP; the sequence is NMSE. The active site involves Asp264. The interval 345–476 is cytidylyltransferase; the sequence is MTNGCFDILH…AIIQNIMANQ (132 aa).

It in the N-terminal section; belongs to the carbohydrate kinase PfkB family. This sequence in the C-terminal section; belongs to the cytidylyltransferase family. Homodimer.

It carries out the reaction D-glycero-beta-D-manno-heptose 7-phosphate + ATP = D-glycero-beta-D-manno-heptose 1,7-bisphosphate + ADP + H(+). It catalyses the reaction D-glycero-beta-D-manno-heptose 1-phosphate + ATP + H(+) = ADP-D-glycero-beta-D-manno-heptose + diphosphate. It functions in the pathway nucleotide-sugar biosynthesis; ADP-L-glycero-beta-D-manno-heptose biosynthesis; ADP-L-glycero-beta-D-manno-heptose from D-glycero-beta-D-manno-heptose 7-phosphate: step 1/4. It participates in nucleotide-sugar biosynthesis; ADP-L-glycero-beta-D-manno-heptose biosynthesis; ADP-L-glycero-beta-D-manno-heptose from D-glycero-beta-D-manno-heptose 7-phosphate: step 3/4. Functionally, catalyzes the phosphorylation of D-glycero-D-manno-heptose 7-phosphate at the C-1 position to selectively form D-glycero-beta-D-manno-heptose-1,7-bisphosphate. Catalyzes the ADP transfer from ATP to D-glycero-beta-D-manno-heptose 1-phosphate, yielding ADP-D-glycero-beta-D-manno-heptose. The protein is Bifunctional protein HldE of Shewanella putrefaciens (strain CN-32 / ATCC BAA-453).